A 213-amino-acid polypeptide reads, in one-letter code: Pyridoxine/pyridoxamine 5'-phosphate oxidase (213 aa).

FMN is bound by residues 60–65 (RMVLMK), 75–76 (YS), Lys82, and Gln104. Position 65 (Lys65) interacts with substrate. 2 residues coordinate substrate: Tyr122 and Arg126. Residues 139 to 140 (QS) and Trp184 each bind FMN. 190 to 192 (RLH) is a binding site for substrate. An FMN-binding site is contributed by Arg194.

Belongs to the pyridoxamine 5'-phosphate oxidase family. Homodimer. FMN serves as cofactor.

The enzyme catalyses pyridoxamine 5'-phosphate + O2 + H2O = pyridoxal 5'-phosphate + H2O2 + NH4(+). The catalysed reaction is pyridoxine 5'-phosphate + O2 = pyridoxal 5'-phosphate + H2O2. The protein operates within cofactor metabolism; pyridoxal 5'-phosphate salvage; pyridoxal 5'-phosphate from pyridoxamine 5'-phosphate: step 1/1. It functions in the pathway cofactor metabolism; pyridoxal 5'-phosphate salvage; pyridoxal 5'-phosphate from pyridoxine 5'-phosphate: step 1/1. Functionally, catalyzes the oxidation of either pyridoxine 5'-phosphate (PNP) or pyridoxamine 5'-phosphate (PMP) into pyridoxal 5'-phosphate (PLP). This chain is Pyridoxine/pyridoxamine 5'-phosphate oxidase, found in Bradyrhizobium diazoefficiens (strain JCM 10833 / BCRC 13528 / IAM 13628 / NBRC 14792 / USDA 110).